We begin with the raw amino-acid sequence, 342 residues long: Dihydroorotate dehydrogenase (quinone) (342 aa).

Residues Ala65–Lys69 and Thr89 contribute to the FMN site. Residue Lys69 coordinates substrate. Asn114–Phe118 contacts substrate. Positions 142 and 175 each coordinate FMN. Asn175 is a binding site for substrate. Residue Ser178 is the Nucleophile of the active site. Asn180 lines the substrate pocket. Residues Lys220 and Thr248 each coordinate FMN. Residue Asn249–Thr250 participates in substrate binding. FMN-binding positions include Gly271, Gly300, and Tyr321–Thr322.

Belongs to the dihydroorotate dehydrogenase family. Type 2 subfamily. Monomer. The cofactor is FMN.

Its subcellular location is the cell membrane. It carries out the reaction (S)-dihydroorotate + a quinone = orotate + a quinol. Its pathway is pyrimidine metabolism; UMP biosynthesis via de novo pathway; orotate from (S)-dihydroorotate (quinone route): step 1/1. Its function is as follows. Catalyzes the conversion of dihydroorotate to orotate with quinone as electron acceptor. This chain is Dihydroorotate dehydrogenase (quinone), found in Burkholderia pseudomallei (strain K96243).